The chain runs to 205 residues: Imidazole glycerol phosphate synthase subunit HisH (205 aa).

Residues 3–205 (RIALLDYGMG…LLKNFVEWNI (203 aa)) form the Glutamine amidotransferase type-1 domain. The Nucleophile role is filled by Cys-80. Catalysis depends on residues His-185 and Glu-187.

In terms of assembly, heterodimer of HisH and HisF.

Its subcellular location is the cytoplasm. It carries out the reaction 5-[(5-phospho-1-deoxy-D-ribulos-1-ylimino)methylamino]-1-(5-phospho-beta-D-ribosyl)imidazole-4-carboxamide + L-glutamine = D-erythro-1-(imidazol-4-yl)glycerol 3-phosphate + 5-amino-1-(5-phospho-beta-D-ribosyl)imidazole-4-carboxamide + L-glutamate + H(+). The enzyme catalyses L-glutamine + H2O = L-glutamate + NH4(+). It functions in the pathway amino-acid biosynthesis; L-histidine biosynthesis; L-histidine from 5-phospho-alpha-D-ribose 1-diphosphate: step 5/9. Functionally, IGPS catalyzes the conversion of PRFAR and glutamine to IGP, AICAR and glutamate. The HisH subunit catalyzes the hydrolysis of glutamine to glutamate and ammonia as part of the synthesis of IGP and AICAR. The resulting ammonia molecule is channeled to the active site of HisF. In Acinetobacter baylyi (strain ATCC 33305 / BD413 / ADP1), this protein is Imidazole glycerol phosphate synthase subunit HisH.